A 173-amino-acid polypeptide reads, in one-letter code: MEKPVVLGTLGTVYGIKGWLKVNSFTDVAEAIFDYNPWMINQNGVWRELKVSAWKRHNKGLICKIDGIDLREDALALTNVEIGVPADLLPALPEGEFYWRDLIGCSVSTTKGYDLGKVTELMETGSNDVLVVEANVKDAFGAKERLIPFLEEQVIKHIDLTARTIEVDWDPGF.

The 80-residue stretch at 94 to 173 (EGEFYWRDLI…TIEVDWDPGF (80 aa)) folds into the PRC barrel domain.

It belongs to the RimM family. Binds ribosomal protein uS19.

The protein localises to the cytoplasm. In terms of biological role, an accessory protein needed during the final step in the assembly of 30S ribosomal subunit, possibly for assembly of the head region. Essential for efficient processing of 16S rRNA. May be needed both before and after RbfA during the maturation of 16S rRNA. It has affinity for free ribosomal 30S subunits but not for 70S ribosomes. The polypeptide is Ribosome maturation factor RimM (Aeromonas salmonicida (strain A449)).